Here is a 155-residue protein sequence, read N- to C-terminus: Ribonuclease H (155 aa).

The RNase H type-1 domain occupies 4-145 (NISKVVIYTD…ADKLAAQGRQ (142 aa)). Mg(2+)-binding residues include D13, E51, D73, and D137.

Belongs to the RNase H family. Monomer. Mg(2+) is required as a cofactor.

It is found in the cytoplasm. It carries out the reaction Endonucleolytic cleavage to 5'-phosphomonoester.. Endonuclease that specifically degrades the RNA of RNA-DNA hybrids. The chain is Ribonuclease H from Rickettsia canadensis (strain McKiel).